Consider the following 689-residue polypeptide: Glycine--tRNA ligase beta subunit (689 aa).

The protein belongs to the class-II aminoacyl-tRNA synthetase family. As to quaternary structure, tetramer of two alpha and two beta subunits.

It localises to the cytoplasm. It catalyses the reaction tRNA(Gly) + glycine + ATP = glycyl-tRNA(Gly) + AMP + diphosphate. This Desulforapulum autotrophicum (strain ATCC 43914 / DSM 3382 / VKM B-1955 / HRM2) (Desulfobacterium autotrophicum) protein is Glycine--tRNA ligase beta subunit.